We begin with the raw amino-acid sequence, 375 residues long: Erythronate-4-phosphate dehydrogenase (375 aa).

The substrate site is built by serine 45 and threonine 66. NAD(+) contacts are provided by aspartate 146 and threonine 175. Arginine 208 is an active-site residue. Aspartate 232 serves as a coordination point for NAD(+). The active site involves glutamate 237. Catalysis depends on histidine 254, which acts as the Proton donor. Residue glycine 257 participates in NAD(+) binding. Tyrosine 258 contributes to the substrate binding site.

The protein belongs to the D-isomer specific 2-hydroxyacid dehydrogenase family. PdxB subfamily. As to quaternary structure, homodimer.

It is found in the cytoplasm. The catalysed reaction is 4-phospho-D-erythronate + NAD(+) = (R)-3-hydroxy-2-oxo-4-phosphooxybutanoate + NADH + H(+). It participates in cofactor biosynthesis; pyridoxine 5'-phosphate biosynthesis; pyridoxine 5'-phosphate from D-erythrose 4-phosphate: step 2/5. Functionally, catalyzes the oxidation of erythronate-4-phosphate to 3-hydroxy-2-oxo-4-phosphonooxybutanoate. The protein is Erythronate-4-phosphate dehydrogenase of Yersinia enterocolitica serotype O:8 / biotype 1B (strain NCTC 13174 / 8081).